Reading from the N-terminus, the 366-residue chain is DNA-directed RNA polymerase II subunit GRINL1A (366 aa).

A disordered region spans residues 1–23 (MFSLPRGFEPPAPEDLGRQSSAE). The stretch at 15 to 39 (DLGRQSSAELRERLRRQERLLRNEK) forms a coiled coil. Positions 29 to 68 (RRQERLLRNEKFICKLPDKGKKISDTVAKLKAAISEREEV) are important for transcription repressor activity. 4 disordered regions span residues 88 to 140 (ATTR…HRGN), 158 to 182 (IRAR…QEEE), 201 to 225 (ADQS…ETPK), and 237 to 280 (ARNP…RRAR). Positions 90–100 (TRADTDVDKAQ) are enriched in basic and acidic residues. Residues 101–127 (SSDLMLDTSSLDPDCSSIDIKSSKSTS) are compositionally biased toward low complexity. An interaction with Pol II region spans residues 225–296 (KKPHYMKVLE…TAARLLPLHH (72 aa)). Residues 251 to 272 (VLPTQQSDSPSHCQRGQSPASS) are compositionally biased toward polar residues. Ser268 carries the phosphoserine modification. The segment at 297–312 (LPAQLLSIEESLALQR) is important for transcription repressor activity. A coiled-coil region spans residues 299–333 (AQLLSIEESLALQREQKQNYEEMQAKLAAQKLAER). Residues 313-338 (EQKQNYEEMQAKLAAQKLAERLNIKM) are interaction with Pol II. The disordered stretch occupies residues 338-366 (MQSYNPEGESSGRYREVRDEADAQSSDEC). Over residues 347–358 (SSGRYREVRDEA) the composition is skewed to basic and acidic residues.

Belongs to the GRINL1 family. Component of the Pol II(G) complex, which contains the RNA polymerase II (Pol II) core complex subunits and POLR2M isoform 1. Pol II(G) appears to be an abundant form of Pol II. Post-translationally, dephosphorylated at Ser-268 by the PNUTS-PP1 complex, promoting RNA polymerase II transcription pause-release.

It localises to the nucleus. Its function is as follows. Appears to be a stable component of the Pol II(G) complex form of RNA polymerase II (Pol II). Pol II synthesizes mRNA precursors and many functional non-coding RNAs and is the central component of the basal RNA polymerase II transcription machinery. May play a role in the Mediator complex-dependent regulation of transcription activation. Acts as a negative regulator of transcriptional activation; this repression is relieved by the Mediator complex, which restores Pol II(G) activator-dependent transcription to a level equivalent to that of Pol II. This Mus musculus (Mouse) protein is DNA-directed RNA polymerase II subunit GRINL1A (Polr2m).